Reading from the N-terminus, the 444-residue chain is DNA repair protein RadA (444 aa).

A C4-type zinc finger spans residues 8–25 (CSNCGNISPKWSGQCFDC). 89–96 (GDPGIGKS) contacts ATP. A RadA KNRFG motif motif is present at residues 248–252 (KNRFG). The lon-protease-like stretch occupies residues 347-444 (EVYLSIAGGL…HLKDLKEIIK (98 aa)).

Belongs to the RecA family. RadA subfamily.

In terms of biological role, DNA-dependent ATPase involved in processing of recombination intermediates, plays a role in repairing DNA breaks. Stimulates the branch migration of RecA-mediated strand transfer reactions, allowing the 3' invading strand to extend heteroduplex DNA faster. Binds ssDNA in the presence of ADP but not other nucleotides, has ATPase activity that is stimulated by ssDNA and various branched DNA structures, but inhibited by SSB. Does not have RecA's homology-searching function. The polypeptide is DNA repair protein RadA (Rickettsia conorii (strain ATCC VR-613 / Malish 7)).